Reading from the N-terminus, the 391-residue chain is Elongation factor Tu 2 (391 aa).

One can recognise a tr-type G domain in the interval 10-201 (KPHVNIGTIG…EVDRYIPTPE (192 aa)). A G1 region spans residues 19–26 (GHVDHGKT). Position 19–26 (19–26 (GHVDHGKT)) interacts with GTP. T26 provides a ligand contact to Mg(2+). The tract at residues 55–59 (GITIS) is G2. A G3 region spans residues 76 to 79 (DCPG). GTP is bound by residues 76–80 (DCPGH) and 131–134 (NKVD). The interval 131 to 134 (NKVD) is G4. Positions 169 to 171 (SAL) are G5.

This sequence belongs to the TRAFAC class translation factor GTPase superfamily. Classic translation factor GTPase family. EF-Tu/EF-1A subfamily. As to quaternary structure, monomer.

It is found in the cytoplasm. It carries out the reaction GTP + H2O = GDP + phosphate + H(+). GTP hydrolase that promotes the GTP-dependent binding of aminoacyl-tRNA to the A-site of ribosomes during protein biosynthesis. The chain is Elongation factor Tu 2 from Bartonella bacilliformis (strain ATCC 35685 / KC583 / Herrer 020/F12,63).